We begin with the raw amino-acid sequence, 1114 residues long: Probable guanine nucleotide exchange factor MCF2L2 (1114 aa).

The 183-residue stretch at 11 to 193 (PQELTRRLAT…ELGGTLEYRH (183 aa)) folds into the CRAL-TRIO domain. Residues 323-428 (QHFEHDFCKA…KWDILGKSLE (106 aa)) form a Spectrin repeat. Positions 530 to 614 (QTRPVQPVAP…NPELEQQARL (85 aa)) are disordered. The span at 546–559 (KWVSSKTSQPSTSV) shows a compositional bias: polar residues. Basic and acidic residues predominate over residues 577-606 (LNSRGKEDDETKFEVKSEEIFESHHERGNP). In terms of domain architecture, DH spans 619–822 (PRRRIIRDLL…EDLIKSCELA (204 aa)). Residues 834 to 954 (DIGKLGKLLL…WFSEISKLLM (121 aa)) enclose the PH domain. Residues 962-975 (DQGNPQFEMSTSKG) are compositionally biased toward polar residues. Residues 962–1114 (DQGNPQFEMS…LRPRTSAQES (153 aa)) form a disordered region. Basic and acidic residues predominate over residues 986-997 (NMERATTSKEDP). The span at 1017–1028 (TFEDCEGAEDME) shows a compositional bias: acidic residues. Basic and acidic residues-rich tracts occupy residues 1043 to 1067 (DDSHETCSSKSAFLERGESSQGEKE) and 1074 to 1084 (TATRSTEEERA).

The protein belongs to the MCF2 family. Significantly expressed in brain and modestly in pancreas, brain and testis.

Probably functions as a guanine nucleotide exchange factor. In Homo sapiens (Human), this protein is Probable guanine nucleotide exchange factor MCF2L2 (MCF2L2).